Reading from the N-terminus, the 231-residue chain is Cytochrome c oxidase assembly factor 7 (231 aa).

At Ala-2 the chain carries N-acetylalanine. 5 Sel1-like repeats span residues 34–66 (PDGC…EENQ), 68–104 (SDSC…EKPG), 108–146 (IAAC…DGGY), 147–183 (TSSC…DLGH), and 184–219 (IWAC…QLHK).

This sequence belongs to the hcp beta-lactamase family. As to quaternary structure, interacts with CHCHD4/MIA40 through transient intermolecular disulfide bonds.

It localises to the mitochondrion intermembrane space. Required for assembly of mitochondrial respiratory chain complex I and complex IV. The chain is Cytochrome c oxidase assembly factor 7 (COA7) from Homo sapiens (Human).